Here is a 337-residue protein sequence, read N- to C-terminus: Holliday junction branch migration complex subunit RuvB (337 aa).

Positions 4-186 (ADRLIAADNP…FGIVQRLEYY (183 aa)) are large ATPase domain (RuvB-L). ATP-binding positions include I25, R26, G67, K70, T71, T72, 133–135 (EDY), R176, Y186, and R223. Residue T71 coordinates Mg(2+). Positions 187-257 (KVEDLQHIVQ…IADKALNMLD (71 aa)) are small ATPAse domain (RuvB-S). Residues 260–337 (VRGFDYMDRK…LHFGIDKPDK (78 aa)) are head domain (RuvB-H). DNA is bound by residues R296, R315, and R320.

The protein belongs to the RuvB family. Homohexamer. Forms an RuvA(8)-RuvB(12)-Holliday junction (HJ) complex. HJ DNA is sandwiched between 2 RuvA tetramers; dsDNA enters through RuvA and exits via RuvB. An RuvB hexamer assembles on each DNA strand where it exits the tetramer. Each RuvB hexamer is contacted by two RuvA subunits (via domain III) on 2 adjacent RuvB subunits; this complex drives branch migration. In the full resolvosome a probable DNA-RuvA(4)-RuvB(12)-RuvC(2) complex forms which resolves the HJ.

The protein resides in the cytoplasm. The catalysed reaction is ATP + H2O = ADP + phosphate + H(+). In terms of biological role, the RuvA-RuvB-RuvC complex processes Holliday junction (HJ) DNA during genetic recombination and DNA repair, while the RuvA-RuvB complex plays an important role in the rescue of blocked DNA replication forks via replication fork reversal (RFR). RuvA specifically binds to HJ cruciform DNA, conferring on it an open structure. The RuvB hexamer acts as an ATP-dependent pump, pulling dsDNA into and through the RuvAB complex. RuvB forms 2 homohexamers on either side of HJ DNA bound by 1 or 2 RuvA tetramers; 4 subunits per hexamer contact DNA at a time. Coordinated motions by a converter formed by DNA-disengaged RuvB subunits stimulates ATP hydrolysis and nucleotide exchange. Immobilization of the converter enables RuvB to convert the ATP-contained energy into a lever motion, pulling 2 nucleotides of DNA out of the RuvA tetramer per ATP hydrolyzed, thus driving DNA branch migration. The RuvB motors rotate together with the DNA substrate, which together with the progressing nucleotide cycle form the mechanistic basis for DNA recombination by continuous HJ branch migration. Branch migration allows RuvC to scan DNA until it finds its consensus sequence, where it cleaves and resolves cruciform DNA. This is Holliday junction branch migration complex subunit RuvB from Aliivibrio fischeri (strain ATCC 700601 / ES114) (Vibrio fischeri).